Reading from the N-terminus, the 385-residue chain is Flap endonuclease 1 (385 aa).

The segment at 1–104 is N-domain; sequence MGILGLSKLI…GELAKRAERR (104 aa). Mg(2+) is bound at residue Asp-34. DNA-binding residues include Arg-47 and Arg-70. Residues Asp-86, Glu-158, Glu-160, Asp-179, and Asp-181 each contribute to the Mg(2+) site. The I-domain stretch occupies residues 122–253; that stretch reads GIEKFNRRLV…KRAIELINTY (132 aa). Glu-158 provides a ligand contact to DNA. Gly-231 and Asp-233 together coordinate DNA. Residue Asp-233 coordinates Mg(2+). The interaction with PCNA stretch occupies residues 336–344; that stretch reads TQVRLDSFF. The disordered stretch occupies residues 346–385; it reads TLPSTPNATNAAKRKAEEAKKSANNKKAKTSGGGRGRRPK. Residues 368-385 show a composition bias toward basic residues; sequence ANNKKAKTSGGGRGRRPK.

This sequence belongs to the XPG/RAD2 endonuclease family. FEN1 subfamily. In terms of assembly, interacts with PCNA. Three molecules of FEN1 bind to one PCNA trimer with each molecule binding to one PCNA monomer. PCNA stimulates the nuclease activity without altering cleavage specificity. Mg(2+) is required as a cofactor. Post-translationally, phosphorylated. Phosphorylation upon DNA damage induces relocalization to the nuclear plasma.

It localises to the nucleus. The protein localises to the nucleolus. Its subcellular location is the nucleoplasm. It is found in the mitochondrion. In terms of biological role, structure-specific nuclease with 5'-flap endonuclease and 5'-3' exonuclease activities involved in DNA replication and repair. During DNA replication, cleaves the 5'-overhanging flap structure that is generated by displacement synthesis when DNA polymerase encounters the 5'-end of a downstream Okazaki fragment. It enters the flap from the 5'-end and then tracks to cleave the flap base, leaving a nick for ligation. Also involved in the long patch base excision repair (LP-BER) pathway, by cleaving within the apurinic/apyrimidinic (AP) site-terminated flap. Acts as a genome stabilization factor that prevents flaps from equilibrating into structures that lead to duplications and deletions. Also possesses 5'-3' exonuclease activity on nicked or gapped double-stranded DNA, and exhibits RNase H activity. Also involved in replication and repair of rDNA and in repairing mitochondrial DNA. The protein is Flap endonuclease 1 of Drosophila simulans (Fruit fly).